Reading from the N-terminus, the 180-residue chain is uncharacterized protein (180 aa).

A run of 6 helical transmembrane segments spans residues 4 to 24, 25 to 45, 57 to 77, 81 to 101, 124 to 144, and 156 to 176; these read KSNIKLILATDLLAVLILSLF, IKNFKMVLAFLLAVFVIWLFI, NLLAMSVGFIEGILIFLGIIY, FLDITLGIFAILILIVMGILF, FLTLISIFGMLLTIYVFLLIL, and IIRTIMLVITANMFIIEFYTF.

Its subcellular location is the cell membrane. This is an uncharacterized protein from Methanocaldococcus jannaschii (strain ATCC 43067 / DSM 2661 / JAL-1 / JCM 10045 / NBRC 100440) (Methanococcus jannaschii).